The primary structure comprises 343 residues: N-acetyl-gamma-glutamyl-phosphate reductase (343 aa).

The active site involves cysteine 148.

The protein belongs to the NAGSA dehydrogenase family. Type 1 subfamily.

Its subcellular location is the cytoplasm. The catalysed reaction is N-acetyl-L-glutamate 5-semialdehyde + phosphate + NADP(+) = N-acetyl-L-glutamyl 5-phosphate + NADPH + H(+). Its pathway is amino-acid biosynthesis; L-arginine biosynthesis; N(2)-acetyl-L-ornithine from L-glutamate: step 3/4. Catalyzes the NADPH-dependent reduction of N-acetyl-5-glutamyl phosphate to yield N-acetyl-L-glutamate 5-semialdehyde. The sequence is that of N-acetyl-gamma-glutamyl-phosphate reductase from Caldicellulosiruptor bescii (strain ATCC BAA-1888 / DSM 6725 / KCTC 15123 / Z-1320) (Anaerocellum thermophilum).